An 852-amino-acid chain; its full sequence is Disease resistance RPP13-like protein 4 (852 aa).

The stretch at Leu-17–Leu-68 forms a coiled coil. ADP is bound by residues Arg-149, Val-161, Gly-189–Thr-196, Arg-297, and Lys-363. One can recognise an NB-ARC domain in the interval Glu-164–Glu-410. 6 LRR repeats span residues Cys-558–Glu-581, Leu-585–Leu-609, Phe-633–Leu-657, Leu-683–Ser-706, Leu-763–Asn-786, and Leu-798–Asn-824.

This sequence belongs to the disease resistance NB-LRR family. RPP13 subfamily. As to quaternary structure, interacts with ZED1/ZRK5. Component of a stable high-order oligomeric complex made of RKS1 and RPP13L4/ZAR1 which recruits ZED1-related kinases (e.g. uridylylated PBL2 and acetylated ZED1/ZRK5) in the presence of ATP and pathogenic bacteria type III secreted effector (T3SE) proteins (e.g. Pseudomonas syringae HopZ1a and HopF2a and Xanthomonas campestris pv. campestris (Xcc) XopAC/AvrAC) to form a wheel-like pentameric resistosome; this complex triggers immunity toward pathogenic bacteria (e.g. X.campestris and P.syringae), especially in vascular tissues. Interacts with RKS1, ZED1/ZRK5, ZRK3, ZRK6 and ZRK15.

The protein localises to the cell membrane. Its subcellular location is the nucleus. With respect to regulation, exhibits autoinhibition activity. In terms of biological role, CC-NB-LRR receptor-like protein required for recognition of pathogenic bacteria type III effectors (T3E) such as Pseudomonas syringae HopZ1a and HopF2a and Xanthomonas campestris pv. campestris (Xcc) XopAC/AvrAC; this recognition requires ZED1-related kinases (e.g. PBL2, ZRK3 and ZED1/ZRK5). Confers allele-specific recognition and virulence attenuation of HopZ1a. Immunity mediated by RPP13L4/ZAR1 is independent of several genes required by other resistance protein signaling pathways such as NDR1 and RAR1. Together with ZED1/ZRK5, involved in the regulation of the ambient temperature-sensitive intersection of growth and immune response in the absence of pathogens. The sequence is that of Disease resistance RPP13-like protein 4 (RPP13L4) from Arabidopsis thaliana (Mouse-ear cress).